Here is a 379-residue protein sequence, read N- to C-terminus: DNA-directed RNA polymerase subunit Rpo1C (379 aa).

It belongs to the RNA polymerase beta' chain family. As to quaternary structure, part of the RNA polymerase complex.

It localises to the cytoplasm. The catalysed reaction is RNA(n) + a ribonucleoside 5'-triphosphate = RNA(n+1) + diphosphate. Functionally, DNA-dependent RNA polymerase (RNAP) catalyzes the transcription of DNA into RNA using the four ribonucleoside triphosphates as substrates. Forms part of the jaw domain. The polypeptide is DNA-directed RNA polymerase subunit Rpo1C (Pyrobaculum aerophilum (strain ATCC 51768 / DSM 7523 / JCM 9630 / CIP 104966 / NBRC 100827 / IM2)).